The chain runs to 441 residues: Serine hydroxymethyltransferase (441 aa).

(6S)-5,6,7,8-tetrahydrofolate is bound at residue 124 to 126 (GHI). K239 bears the N6-(pyridoxal phosphate)lysine mark.

This sequence belongs to the SHMT family. In terms of assembly, homodimer. The cofactor is pyridoxal 5'-phosphate.

It is found in the cytoplasm. The protein operates within amino-acid biosynthesis; glycine biosynthesis; glycine from L-serine: step 1/1. Functionally, catalyzes the reversible interconversion of serine and glycine with a modified folate serving as the one-carbon carrier. Also exhibits a pteridine-independent aldolase activity toward beta-hydroxyamino acids, producing glycine and aldehydes, via a retro-aldol mechanism. In Cenarchaeum symbiosum (strain A), this protein is Serine hydroxymethyltransferase.